The chain runs to 153 residues: ORM1-like protein 2 (153 aa).

Residues M1–G21 lie on the Cytoplasmic side of the membrane. 2 helical membrane-spanning segments follow: residues I22–F42 and F43–F63. At L64 to S105 the chain is on the cytoplasmic side. Residues P106–I126 traverse the membrane as a helical segment. At N127–Y153 the chain is on the extracellular side.

The protein belongs to the ORM family. Ceramide-sensitive subunit of the serine palmitoyltransferase (SPT) complex, which is also composed of SPTLC1, SPTLC2/3 and SPTSSA/B. In terms of tissue distribution, widely expressed. Expressed in adult and fetal heart, brain, lung, liver, skeletal muscle and kidney. Expressed in adult pancreas and placenta and in fetal spleen abd thymus.

Its subcellular location is the endoplasmic reticulum membrane. In terms of biological role, plays an essential role in the homeostatic regulation of sphingolipid de novo biosynthesis by modulating the activity of the serine palmitoyltransferase (SPT) in response to ceramide levels. When complexed to SPT, the binding of ceramides to its N-terminus stabilizes a conformation that block SPT substrate entry, hence preventing SPT catalytic activity. Through this mechanism, maintains ceramide levels at sufficient concentrations for the production of complex sphingolipids, but which prevents the accumulation of ceramides to levels that trigger apoptosis. The polypeptide is ORM1-like protein 2 (ORMDL2) (Homo sapiens (Human)).